Consider the following 1330-residue polypeptide: ABC multidrug transporter mdr4 (1330 aa).

Asn3 is a glycosylation site (N-linked (GlcNAc...) asparagine). The next 6 helical transmembrane spans lie at 90–110 (VLLI…FPLL), 144–164 (VLYV…HSTC), 218–238 (KVGL…VAFI), 243–263 (IAGM…GGGH), 324–344 (HAAQ…LAFW), and 370–390 (IFVL…IHVF). The ABC transmembrane type-1 1 domain maps to 94-392 (IGGLLFAICA…VAPFIHVFAS (299 aa)). Positions 428–666 (IRFRDVHFKY…GGVYAEMVRL (239 aa)) constitute an ABC transporter 1 domain. 463 to 470 (GPSGGGKS) is a binding site for ATP. Asn707 carries N-linked (GlcNAc...) asparagine glycosylation. A disordered region spans residues 717–736 (VADTPSDSRDGSEEEARKKR). Residues 722–733 (SDSRDGSEEEAR) show a composition bias toward basic and acidic residues. 6 consecutive transmembrane segments (helical) span residues 761–781 (LLGL…AIVF), 806–826 (LLFF…GCAF), 871–893 (ASAL…VNLI), 903–923 (AWKI…SGMM), 989–1009 (AWLA…YWWG), and 1023–1043 (FFIV…MFAL). In terms of domain architecture, ABC transmembrane type-1 2 spans 761–1049 (LLGLAMSVII…MFALAPDISK (289 aa)). Residues 1086–1325 (AQLRDVHFTY…SETYRTSVIH (240 aa)) form the ABC transporter 2 domain. ATP is bound at residue 1121–1128 (GPSGSGKS).

It belongs to the ABC transporter superfamily. ABCB family. Multidrug resistance exporter (TC 3.A.1.201) subfamily.

The protein localises to the cell membrane. The catalysed reaction is itraconazole(in) + ATP + H2O = itraconazole(out) + ADP + phosphate + H(+). It catalyses the reaction voriconazole(in) + ATP + H2O = voriconazole(out) + ADP + phosphate + H(+). In terms of biological role, pleiotropic ABC efflux transporter that confers resistance to azoles such as itraconazole and voriconazole. The sequence is that of ABC multidrug transporter mdr4 from Aspergillus fumigatus (strain ATCC MYA-4609 / CBS 101355 / FGSC A1100 / Af293) (Neosartorya fumigata).